The sequence spans 217 residues: Regulator of G-protein signaling 19 (217 aa).

The disordered stretch occupies residues 1 to 29; it reads MPTPHEAEKQITGPEEADRPPSMSSHDTA. Phosphoserine occurs at positions 24 and 97. Residues 90-206 enclose the RGS domain; sequence SFDKLMHSPA…LSSPTYRALL (117 aa). Ser151 carries the phosphoserine; by MAPK1 and MAPK3 modification. The segment at 207–217 is interaction with GIPC; it reads LQGPSQSSSEA.

As to quaternary structure, interacts with GIPC PDZ domain. Interacts with GNAO1. In terms of processing, fatty acylated. Heavily palmitoylated in the cysteine string motif. Post-translationally, phosphorylated, mainly on serine residues. As to expression, highest expression in lung. Placenta, liver and heart also express high levels of GAIP.

It is found in the membrane. Functionally, inhibits signal transduction by increasing the GTPase activity of G protein alpha subunits thereby driving them into their inactive GDP-bound form. Binds to G-alpha subfamily 1 members, with the order G(i)a3 &gt; G(i)a1 &gt; G(o)a &gt;&gt; G(z)a/G(i)a2. Activity on G(z)-alpha is inhibited by phosphorylation and palmitoylation of the G-protein. In Homo sapiens (Human), this protein is Regulator of G-protein signaling 19 (RGS19).